A 272-amino-acid polypeptide reads, in one-letter code: 3',5'-cyclic adenosine monophosphate phosphodiesterase CpdA (272 aa).

Fe cation is bound by residues D21, H23, D63, N93, H161, H200, and H202. Residues H23, D63, and 93–94 (NH) contribute to the AMP site. AMP is bound at residue H202.

The protein belongs to the cyclic nucleotide phosphodiesterase class-III family. In terms of assembly, monomer. Requires a divalent metal cation as cofactor.

It catalyses the reaction 3',5'-cyclic AMP + H2O = AMP + H(+). With respect to regulation, activated by iron. Other divalent metal ions have no effect. Functionally, hydrolyzes cAMP to 5'-AMP. Plays an important regulatory role in modulating the intracellular concentration of cAMP, thereby influencing cAMP-dependent processes. Specifically required for regulation of virulence factors. Can also hydrolyze cGMP, but cGMP is unlikely to be synthesized by P.aeruginosa and cAMP is probably the biologically relevant substrate for CpdA in vivo. The polypeptide is 3',5'-cyclic adenosine monophosphate phosphodiesterase CpdA (Pseudomonas aeruginosa).